Reading from the N-terminus, the 126-residue chain is Large-conductance mechanosensitive channel (126 aa).

A run of 2 helical transmembrane segments spans residues 17-37 (VDLA…SSFI) and 70-90 (GLFL…FLII).

The protein belongs to the MscL family. In terms of assembly, homopentamer.

The protein resides in the cell inner membrane. Channel that opens in response to stretch forces in the membrane lipid bilayer. May participate in the regulation of osmotic pressure changes within the cell. This Flavobacterium johnsoniae (strain ATCC 17061 / DSM 2064 / JCM 8514 / BCRC 14874 / CCUG 350202 / NBRC 14942 / NCIMB 11054 / UW101) (Cytophaga johnsonae) protein is Large-conductance mechanosensitive channel.